A 375-amino-acid polypeptide reads, in one-letter code: Alcohol dehydrogenase 1A (375 aa).

An N-acetylserine modification is found at S2. Position 23 is a phosphoserine (S23). Y35 carries the phosphotyrosine modification. Zn(2+) is bound at residue C47. 48 to 52 (GTDDH) is an NAD(+) binding site. Residues H68, C98, C101, C104, C112, and C175 each coordinate Zn(2+). NAD(+) contacts are provided by residues 200–205 (GLGGVG), D224, K229, I270, 293–295 (VGV), 318–320 (AVY), and R370.

The protein belongs to the zinc-containing alcohol dehydrogenase family. As to quaternary structure, dimer of identical or heterodimer of closely related subunits alpha, beta, or gamma that are encoded by genes ADH1A, ADH1B, and ADH1C, respectively. Zn(2+) serves as cofactor.

It localises to the cytoplasm. It carries out the reaction a primary alcohol + NAD(+) = an aldehyde + NADH + H(+). The enzyme catalyses a secondary alcohol + NAD(+) = a ketone + NADH + H(+). It catalyses the reaction butan-1-ol + NAD(+) = butanal + NADH + H(+). The catalysed reaction is 1-propanol + NAD(+) = propanal + NADH + H(+). It carries out the reaction propan-2-ol + NAD(+) = acetone + NADH + H(+). Alcohol dehydrogenase. Oxidizes primary as well as secondary alcohols. Ethanol is a very poor substrate. This is Alcohol dehydrogenase 1A (ADH1A) from Macaca mulatta (Rhesus macaque).